Reading from the N-terminus, the 179-residue chain is Large ribosomal subunit protein uL6 (179 aa).

The protein belongs to the universal ribosomal protein uL6 family. Part of the 50S ribosomal subunit.

This protein binds to the 23S rRNA, and is important in its secondary structure. It is located near the subunit interface in the base of the L7/L12 stalk, and near the tRNA binding site of the peptidyltransferase center. The polypeptide is Large ribosomal subunit protein uL6 (Solidesulfovibrio magneticus (strain ATCC 700980 / DSM 13731 / RS-1) (Desulfovibrio magneticus)).